Consider the following 510-residue polypeptide: G-protein coupled receptor dmsr-1 (510 aa).

The Extracellular segment spans residues 1 to 35 (MEFTECKTTFIHLPDKSFLYDVFVSVYNFYHPIHA). The helical transmembrane segment at 36–56 (YLSIFLCVLGTIANFCNIVVL) threads the bilayer. Topologically, residues 57–64 (TRRTMRTP) are cytoplasmic. A helical transmembrane segment spans residues 65 to 85 (VNMILTAMASCDTVVLFSNLI). Residues 86–107 (YTTHYSFVAFKFCHPKHWSYSW) lie on the Extracellular side of the membrane. A helical transmembrane segment spans residues 108 to 128 (ALFLIAHAHLSLVAHSSSVWL). Over 129–155 (SVMLALVRYVTLRSRGNMGGMQVTLRH) the chain is Cytoplasmic. The chain crosses the membrane as a helical span at residues 156-176 (SYYAVAVTVSLVAVLNAPNFL). The Extracellular portion of the chain corresponds to 177–223 (NYKINEQPLNETCTDLDPMFWNSPAYLPGIADIAKANSCLVFRLSYW). N-linked (GlcNAc...) asparagine glycosylation is present at Asn186. A helical transmembrane segment spans residues 224–244 (ISGMVFKVLPCALLSLFVWLL). At 245-307 (LRILREVREN…GERVDRTTHM (63 aa)) the chain is on the cytoplasmic side. The helical transmembrane segment at 308–328 (LLAIVAVMLVTELPQGIMAVL) threads the bilayer. The Extracellular segment spans residues 329-343 (SGMCSEEFRIYIYNN). Residues 344–364 (LGDILDLFSLCGSCCSFIIYC) form a helical membrane-spanning segment. Topologically, residues 365–510 (SMSGQFRNEF…DGIRGHFQNI (146 aa)) are cytoplasmic. The disordered stretch occupies residues 452 to 510 (GCDSITPCSPMPTSFPSSPLPPIRSGEDESTDETSHLLNSSGPNSTASADGIRGHFQNI). The span at 487–499 (HLLNSSGPNSTAS) shows a compositional bias: polar residues.

It belongs to the G-protein coupled receptor 1 family. Expressed in head neurons including the RID neuron and the paired AIY neurons, and in tail neurons including the paired PHA and PHB neurons. Not expressed in AVE and AVA neurons.

The protein resides in the cell membrane. Its function is as follows. G-protein coupled receptor. In terms of biological role, G-protein coupled receptor for flp-13 RFamide neuropeptides in vitro. Upon activation by flp-13 RFamide neuropeptides, promotes sleep in response to cellular stress also known as stress-induced sleep (SIS), probably by inhibiting the activity of wake-promoting neurons. The protein is G-protein coupled receptor dmsr-1 of Caenorhabditis elegans.